The following is a 335-amino-acid chain: Holliday junction branch migration complex subunit RuvB (335 aa).

Residues 1–181 (MERIIEIEKM…FGMNFWMQFY (181 aa)) form a large ATPase domain (RuvB-L) region. ATP is bound by residues Leu-20, Arg-21, Gly-62, Lys-65, Thr-66, Thr-67, 128-130 (EDF), Arg-171, Tyr-181, and Arg-218. Thr-66 contacts Mg(2+). The interval 182 to 252 (NIEELSQIIT…QARYALHELG (71 aa)) is small ATPAse domain (RuvB-S). The tract at residues 255-335 (DHGFDDLDLR…LPFEPNATLF (81 aa)) is head domain (RuvB-H). DNA contacts are provided by Arg-309 and Arg-314.

This sequence belongs to the RuvB family. Homohexamer. Forms an RuvA(8)-RuvB(12)-Holliday junction (HJ) complex. HJ DNA is sandwiched between 2 RuvA tetramers; dsDNA enters through RuvA and exits via RuvB. An RuvB hexamer assembles on each DNA strand where it exits the tetramer. Each RuvB hexamer is contacted by two RuvA subunits (via domain III) on 2 adjacent RuvB subunits; this complex drives branch migration. In the full resolvosome a probable DNA-RuvA(4)-RuvB(12)-RuvC(2) complex forms which resolves the HJ.

It localises to the cytoplasm. The catalysed reaction is ATP + H2O = ADP + phosphate + H(+). The RuvA-RuvB-RuvC complex processes Holliday junction (HJ) DNA during genetic recombination and DNA repair, while the RuvA-RuvB complex plays an important role in the rescue of blocked DNA replication forks via replication fork reversal (RFR). RuvA specifically binds to HJ cruciform DNA, conferring on it an open structure. The RuvB hexamer acts as an ATP-dependent pump, pulling dsDNA into and through the RuvAB complex. RuvB forms 2 homohexamers on either side of HJ DNA bound by 1 or 2 RuvA tetramers; 4 subunits per hexamer contact DNA at a time. Coordinated motions by a converter formed by DNA-disengaged RuvB subunits stimulates ATP hydrolysis and nucleotide exchange. Immobilization of the converter enables RuvB to convert the ATP-contained energy into a lever motion, pulling 2 nucleotides of DNA out of the RuvA tetramer per ATP hydrolyzed, thus driving DNA branch migration. The RuvB motors rotate together with the DNA substrate, which together with the progressing nucleotide cycle form the mechanistic basis for DNA recombination by continuous HJ branch migration. Branch migration allows RuvC to scan DNA until it finds its consensus sequence, where it cleaves and resolves cruciform DNA. This is Holliday junction branch migration complex subunit RuvB from Wolinella succinogenes (strain ATCC 29543 / DSM 1740 / CCUG 13145 / JCM 31913 / LMG 7466 / NCTC 11488 / FDC 602W) (Vibrio succinogenes).